The sequence spans 120 residues: Large ribosomal subunit protein uL18 (120 aa).

The protein belongs to the universal ribosomal protein uL18 family. As to quaternary structure, part of the 50S ribosomal subunit; part of the 5S rRNA/L5/L18/L25 subcomplex. Contacts the 5S and 23S rRNAs.

Its function is as follows. This is one of the proteins that bind and probably mediate the attachment of the 5S RNA into the large ribosomal subunit, where it forms part of the central protuberance. This Chloroflexus aurantiacus (strain ATCC 29364 / DSM 637 / Y-400-fl) protein is Large ribosomal subunit protein uL18.